A 274-amino-acid polypeptide reads, in one-letter code: NADPH-dependent 7-cyano-7-deazaguanine reductase (274 aa).

Residue 80 to 82 (VES) coordinates substrate. An NADPH-binding site is contributed by 82–83 (SK). C181 acts as the Thioimide intermediate in catalysis. Catalysis depends on D188, which acts as the Proton donor. Substrate is bound at residue 220 to 221 (HE). NADPH is bound at residue 249–250 (RG).

The protein belongs to the GTP cyclohydrolase I family. QueF type 2 subfamily. Homodimer.

It is found in the cytoplasm. The enzyme catalyses 7-aminomethyl-7-carbaguanine + 2 NADP(+) = 7-cyano-7-deazaguanine + 2 NADPH + 3 H(+). It participates in tRNA modification; tRNA-queuosine biosynthesis. Its function is as follows. Catalyzes the NADPH-dependent reduction of 7-cyano-7-deazaguanine (preQ0) to 7-aminomethyl-7-deazaguanine (preQ1). This Burkholderia vietnamiensis (strain G4 / LMG 22486) (Burkholderia cepacia (strain R1808)) protein is NADPH-dependent 7-cyano-7-deazaguanine reductase.